Reading from the N-terminus, the 234-residue chain is Large ribosomal subunit protein uL1 (234 aa).

Belongs to the universal ribosomal protein uL1 family. In terms of assembly, part of the 50S ribosomal subunit.

Binds directly to 23S rRNA. The L1 stalk is quite mobile in the ribosome, and is involved in E site tRNA release. Functionally, protein L1 is also a translational repressor protein, it controls the translation of the L11 operon by binding to its mRNA. The chain is Large ribosomal subunit protein uL1 from Syntrophobacter fumaroxidans (strain DSM 10017 / MPOB).